The following is a 147-amino-acid chain: MNLTDYVNEVSLEDFAKPFKHHAYWNKRLRTTGGRFFPKDGHLDFNPKMFQEFGQETFRRIVRHELCHYHLYFEGKGYQHKDLDFKRLLKEVDGLRYAPRSTKERGSINYRCQKCGHCYKRQRRINLQKYVCSFCRGHLKEINQSKD.

Residues 5–142 (DYVNEVSLED…SFCRGHLKEI (138 aa)) form the SprT-like domain. His64 contacts Zn(2+). The active site involves Glu65. His68 is a binding site for Zn(2+).

This sequence belongs to the SprT family. Requires Zn(2+) as cofactor.

The protein localises to the cytoplasm. This chain is Protein SprT-like, found in Streptococcus uberis (strain ATCC BAA-854 / 0140J).